The primary structure comprises 431 residues: MTNVVVIGSQWGDEGKGKIVDWLSERADVIVRFQGGHNAGHTLVVDGVSYKLALLPSGLVRGKLSVIGNGVVVDPHHFVAEVEKLRAQGIAVTPDVLRIAENAPLILSLHRDLDALREDAASNSGTKIGTTRRGIGPAYEDKVGRRAIRVIDLSEPETLPAKIDRLLTHHNALRRGMGLSEISFNALHEELTSVAEHILPYMDQVWRLLDEQRKAGARILFEGAQGALLDNDHGTYPFVTSSNTVAGQAAAGSGLGPTALGYVLGITKAYTTRVGEGPFPCELHDEIGKHLSTVGREVGVNTGRPRRCGWFDAVLVRQTVKTSGITGIALTKLDVLDGLDELKICIGYRLDGKEIDYLPSSQAAQARVEPIYITLEGWKESTVGARKWADLPAQAIKYVRQVEELIGAPVAMLSTSPEREDTILVTDPFEG.

Residues 12–18 (GDEGKGK) and 40–42 (GHT) each bind GTP. The active-site Proton acceptor is the Asp13. 2 residues coordinate Mg(2+): Asp13 and Gly40. IMP contacts are provided by residues 13-16 (DEGK), 38-41 (NAGH), Thr131, Arg145, Gln225, Thr240, and Arg304. The Proton donor role is filled by His41. A substrate-binding site is contributed by 300 to 306 (VNTGRPR). GTP-binding positions include Arg306, 332 to 334 (KLD), and 414 to 416 (STS).

Belongs to the adenylosuccinate synthetase family. In terms of assembly, homodimer. Mg(2+) serves as cofactor.

The protein resides in the cytoplasm. The catalysed reaction is IMP + L-aspartate + GTP = N(6)-(1,2-dicarboxyethyl)-AMP + GDP + phosphate + 2 H(+). Its pathway is purine metabolism; AMP biosynthesis via de novo pathway; AMP from IMP: step 1/2. In terms of biological role, plays an important role in the de novo pathway of purine nucleotide biosynthesis. Catalyzes the first committed step in the biosynthesis of AMP from IMP. This chain is Adenylosuccinate synthetase, found in Rhizobium rhizogenes (strain K84 / ATCC BAA-868) (Agrobacterium radiobacter).